The sequence spans 257 residues: MRHLDFVLSPLDQFEVRDLFSLNANLLGNLHLSLTNIGLYLTISIFLILTYSLLATNNNKIIPNNWSISQESIYATVHGIVVNQINPNKGQMFFPLMYVLFIFILVNNLIGLVPYSFASTSHFILTFSISFTVVLGATILGFQRHGLKFFSLFVPSGCPLALLPLLVLIEFISYLSRNVSLGLRLAANILSGHMLLSILSGFTYNIMTSGIIFFILGLIPLAFIIAFSGLELAIAFIQAQVFVVLACSYIKDGLDLH.

A propeptide spans 1 to 8 (MRHLDFVL) (removed in mature form). Helical transmembrane passes span 34-54 (LTNIGLYLTISIFLILTYSLL), 93-113 (FFPLMYVLFIFILVNNLIGLV), 122-142 (HFILTFSISFTVVLGATILGF), 149-169 (FFSLFVPSGCPLALLPLLVLI), 187-207 (ANILSGHMLLSILSGFTYNIM), 210-230 (GIIFFILGLIPLAFIIAFSGL), and 231-251 (ELAIAFIQAQVFVVLACSYIK).

The protein belongs to the ATPase A chain family. As to quaternary structure, F-type ATPases have 2 components, CF(1) - the catalytic core - and CF(0) - the membrane proton channel. CF(1) has five subunits: alpha(3), beta(3), gamma(1), delta(1), epsilon(1). CF(0) has three main subunits: a, b and c.

The protein resides in the mitochondrion inner membrane. Mitochondrial membrane ATP synthase (F(1)F(0) ATP synthase or Complex V) produces ATP from ADP in the presence of a proton gradient across the membrane which is generated by electron transport complexes of the respiratory chain. F-type ATPases consist of two structural domains, F(1) - containing the extramembraneous catalytic core and F(0) - containing the membrane proton channel, linked together by a central stalk and a peripheral stalk. During catalysis, ATP synthesis in the catalytic domain of F(1) is coupled via a rotary mechanism of the central stalk subunits to proton translocation. Key component of the proton channel; it may play a direct role in the translocation of protons across the membrane. The chain is ATP synthase subunit a (atp6) from Penicillium chrysogenum (Penicillium notatum).